Here is a 318-residue protein sequence, read N- to C-terminus: Ribosomal RNA small subunit methyltransferase H (318 aa).

Residues 35 to 37 (GGH), D54, F83, D104, and Q111 contribute to the S-adenosyl-L-methionine site.

It belongs to the methyltransferase superfamily. RsmH family.

It is found in the cytoplasm. It catalyses the reaction cytidine(1402) in 16S rRNA + S-adenosyl-L-methionine = N(4)-methylcytidine(1402) in 16S rRNA + S-adenosyl-L-homocysteine + H(+). Specifically methylates the N4 position of cytidine in position 1402 (C1402) of 16S rRNA. The protein is Ribosomal RNA small subunit methyltransferase H of Latilactobacillus sakei subsp. sakei (strain 23K) (Lactobacillus sakei subsp. sakei).